A 124-amino-acid chain; its full sequence is Large ribosomal subunit protein bL17 (124 aa).

The protein belongs to the bacterial ribosomal protein bL17 family. In terms of assembly, part of the 50S ribosomal subunit. Contacts protein L32.

The protein is Large ribosomal subunit protein bL17 of Mycoplasma pneumoniae (strain ATCC 29342 / M129 / Subtype 1) (Mycoplasmoides pneumoniae).